Reading from the N-terminus, the 320-residue chain is Tyrosine phosphatase H3 (320 aa).

A Tyrosine-protein phosphatase domain is found at 22-309 (NFWEFVRLEH…AFCYKAVRYA (288 aa)). C250 acts as the Phosphocysteine intermediate in catalysis.

The protein belongs to the protein-tyrosine phosphatase family.

It carries out the reaction O-phospho-L-tyrosyl-[protein] + H2O = L-tyrosyl-[protein] + phosphate. In terms of biological role, suppresses host immune cell adhesion and phagocytosis. In Microplitis demolitor (Parasitoid wasp), this protein is Tyrosine phosphatase H3 (H3).